Consider the following 252-residue polypeptide: Tricin synthase 1 (252 aa).

S-adenosyl-L-methionine is bound by residues Ser65, Glu87, 89-90 (GV), Ser95, and Asp113. Asp168 is a binding site for a divalent metal cation. Position 170 (Asp170) interacts with S-adenosyl-L-methionine. Positions 194 and 195 each coordinate a divalent metal cation.

It belongs to the class I-like SAM-binding methyltransferase superfamily. Cation-dependent O-methyltransferase family. CCoAMT subfamily. Mg(2+) is required as a cofactor. It depends on Mn(2+) as a cofactor. Requires Co(2+) as cofactor. Ubiquitous. Highest expression in stems and roots.

The protein resides in the nucleus. The enzyme catalyses tricetin + 2 S-adenosyl-L-methionine = 3',5'-di-O-methyltricetin + 2 S-adenosyl-L-homocysteine + 2 H(+). Catalyzes the stepwise methylation of tricetin to its 3'-mono- and 3',5'-dimethyl ethers. No 3',4',5'-trimethylated ester derivatives are produced. Can use caffeoyl-CoA, 5-hydroxyferulic acid, luteolin, tricetin, quercetin, myrcetin and 7,8-dihydroxyflavone as substrates, but not naringenin, apigenin or kaempferol. The 2,3-double bond and the O-dihydroxyl group of the substrate are both required for catalytic activity of the enzyme. The polypeptide is Tricin synthase 1 (ROMT-15) (Oryza sativa subsp. japonica (Rice)).